The chain runs to 172 residues: Disulfide bond formation protein B (172 aa).

The Cytoplasmic portion of the chain corresponds to 1–13; it reads MIIRLAGMSVRQG. A helical transmembrane segment spans residues 14–30; sequence CLLGLLMCALMMGVALV. Residues 31 to 48 are Periplasmic-facing; that stretch reads LQYVYGLTPCPLCIGQRI. Cysteines 40 and 43 form a disulfide. Residues 49–65 traverse the membrane as a helical segment; the sequence is AVLLAAFVFAIGALHNP. The Cytoplasmic segment spans residues 66 to 72; it reads AGNLGRG. A helical membrane pass occupies residues 73-90; that stretch reads LYAGLAALASVLGLAVAA. Residues 91–147 lie on the Periplasmic side of the membrane; sequence RHVWLQSLPPENVPSCGPGLDYMMEVLPLWDVLSRVLAGSGECAEIHGSLLGMSIPQ. The cysteines at positions 106 and 133 are disulfide-linked. Residues 148-166 form a helical membrane-spanning segment; sequence WTLLGFAVLLLIPLGMLAG. Residues 167-172 lie on the Cytoplasmic side of the membrane; the sequence is IVIRRR.

It belongs to the DsbB family.

Its subcellular location is the cell inner membrane. Functionally, required for disulfide bond formation in some periplasmic proteins. Acts by oxidizing the DsbA protein. The sequence is that of Disulfide bond formation protein B from Chromohalobacter salexigens (strain ATCC BAA-138 / DSM 3043 / CIP 106854 / NCIMB 13768 / 1H11).